A 428-amino-acid chain; its full sequence is MPLHRVEALGEPQDRTGKTFSGRTNGPISSPLTDTERRMSIPQNPAPVNLVGLSREEIAALLRDMGEKPFRAKQLWHWVYHRGETDFSAMTTLGTPLRAKLAETCVVARPHVVREQRSEDGTRKWLLRFPDGNEAETVYIPEDDRGALCVSSQVGCTLTCRFCHTGTQLLVRNLTAHEIVGQFMAARDAYGEWPSPTDESRQLSNIVLMGMGEPLYNYDNVAKAIGILLDNEGIAVSRRRITLSTSGVVPMIRRCGAELGVNLAVSLHAARDEIRDEIMPINRKYPLAELMAACREYPGASNARRITFEYVMLKGVNDSEADARALIKLVEGVPCKFNLIPFNPWPGSGFECPPIRHIERFANILFEAGYTAPIRMPRGRDILAACGQLRSDSLRERASLHKARLAAGVADDHAPAAAPLADTPGAVA.

Over residues 1 to 17 (MPLHRVEALGEPQDRTG) the composition is skewed to basic and acidic residues. The disordered stretch occupies residues 1 to 44 (MPLHRVEALGEPQDRTGKTFSGRTNGPISSPLTDTERRMSIPQN). The segment covering 18–33 (KTFSGRTNGPISSPLT) has biased composition (polar residues). The active-site Proton acceptor is the Glu136. Residues 142–381 (EDDRGALCVS…APIRMPRGRD (240 aa)) form the Radical SAM core domain. Cys149 and Cys386 are disulfide-bonded. Cys156, Cys160, and Cys163 together coordinate [4Fe-4S] cluster. Residues 212 to 213 (GE), Ser244, 266 to 268 (SLH), and Asn343 contribute to the S-adenosyl-L-methionine site. Cys386 acts as the S-methylcysteine intermediate in catalysis.

It belongs to the radical SAM superfamily. RlmN family. [4Fe-4S] cluster is required as a cofactor.

Its subcellular location is the cytoplasm. The enzyme catalyses adenosine(2503) in 23S rRNA + 2 reduced [2Fe-2S]-[ferredoxin] + 2 S-adenosyl-L-methionine = 2-methyladenosine(2503) in 23S rRNA + 5'-deoxyadenosine + L-methionine + 2 oxidized [2Fe-2S]-[ferredoxin] + S-adenosyl-L-homocysteine. It carries out the reaction adenosine(37) in tRNA + 2 reduced [2Fe-2S]-[ferredoxin] + 2 S-adenosyl-L-methionine = 2-methyladenosine(37) in tRNA + 5'-deoxyadenosine + L-methionine + 2 oxidized [2Fe-2S]-[ferredoxin] + S-adenosyl-L-homocysteine. Its function is as follows. Specifically methylates position 2 of adenine 2503 in 23S rRNA and position 2 of adenine 37 in tRNAs. m2A2503 modification seems to play a crucial role in the proofreading step occurring at the peptidyl transferase center and thus would serve to optimize ribosomal fidelity. This chain is Dual-specificity RNA methyltransferase RlmN, found in Rhodospirillum rubrum (strain ATCC 11170 / ATH 1.1.1 / DSM 467 / LMG 4362 / NCIMB 8255 / S1).